The following is a 67-amino-acid chain: Large ribosomal subunit protein bL35 (67 aa).

A disordered region spans residues Gly-22–His-45. Basic residues predominate over residues Asn-35–His-45.

It belongs to the bacterial ribosomal protein bL35 family.

In Aquifex aeolicus (strain VF5), this protein is Large ribosomal subunit protein bL35.